The following is a 208-amino-acid chain: GTP cyclohydrolase-2 (208 aa).

Residue 49–53 coordinates GTP; that stretch reads RLHSE. Zn(2+) is bound by residues Cys54, Cys65, and Cys67. Residues Gln70, 92-94, and Thr114 each bind GTP; that span reads EGR. Residue Asp126 is the Proton acceptor of the active site. Residue Arg128 is the Nucleophile of the active site. Thr149 and Lys154 together coordinate GTP.

Belongs to the GTP cyclohydrolase II family. Zn(2+) is required as a cofactor.

The enzyme catalyses GTP + 4 H2O = 2,5-diamino-6-hydroxy-4-(5-phosphoribosylamino)-pyrimidine + formate + 2 phosphate + 3 H(+). It functions in the pathway cofactor biosynthesis; riboflavin biosynthesis; 5-amino-6-(D-ribitylamino)uracil from GTP: step 1/4. Functionally, catalyzes the conversion of GTP to 2,5-diamino-6-ribosylamino-4(3H)-pyrimidinone 5'-phosphate (DARP), formate and pyrophosphate. The protein is GTP cyclohydrolase-2 of Azotobacter vinelandii (strain DJ / ATCC BAA-1303).